A 571-amino-acid chain; its full sequence is Urease subunit alpha (571 aa).

The region spanning 134 to 571 (GAIDTHIHFI…LPMAQRYFLF (438 aa)) is the Urease domain. The Ni(2+) site is built by histidine 139, histidine 141, and lysine 222. At lysine 222 the chain carries N6-carboxylysine. Histidine 224 contributes to the substrate binding site. Ni(2+) is bound by residues histidine 251 and histidine 277. Histidine 325 serves as the catalytic Proton donor. Aspartate 365 provides a ligand contact to Ni(2+).

Belongs to the metallo-dependent hydrolases superfamily. Urease alpha subunit family. As to quaternary structure, heterotrimer of UreA (gamma), UreB (beta) and UreC (alpha) subunits. Three heterotrimers associate to form the active enzyme. It depends on Ni cation as a cofactor. In terms of processing, carboxylation allows a single lysine to coordinate two nickel ions.

The protein resides in the cytoplasm. It carries out the reaction urea + 2 H2O + H(+) = hydrogencarbonate + 2 NH4(+). The protein operates within nitrogen metabolism; urea degradation; CO(2) and NH(3) from urea (urease route): step 1/1. This is Urease subunit alpha from Bordetella pertussis (strain Tohama I / ATCC BAA-589 / NCTC 13251).